A 358-amino-acid polypeptide reads, in one-letter code: D-alanine--D-alanine ligase (358 aa).

The ATP-grasp domain maps to 136–341; that stretch reads KYILQAAGVP…YGDLIEELIQ (206 aa). 169–224 contributes to the ATP binding site; it reads EGSLLYPMFVKPANMGSSVGISKAENREELQNALALAYQYDSRAIVEQGIEAREIE. Mg(2+)-binding residues include Asp295, Glu308, and Asn310.

This sequence belongs to the D-alanine--D-alanine ligase family. It depends on Mg(2+) as a cofactor. Mn(2+) serves as cofactor.

It is found in the cytoplasm. The enzyme catalyses 2 D-alanine + ATP = D-alanyl-D-alanine + ADP + phosphate + H(+). Its pathway is cell wall biogenesis; peptidoglycan biosynthesis. In terms of biological role, cell wall formation. This is D-alanine--D-alanine ligase from Enterococcus hirae (strain ATCC 9790 / DSM 20160 / JCM 8729 / LMG 6399 / NBRC 3181 / NCIMB 6459 / NCDO 1258 / NCTC 12367 / WDCM 00089 / R).